A 495-amino-acid polypeptide reads, in one-letter code: Lysine--tRNA ligase (495 aa).

Residues Glu-406 and Glu-413 each contribute to the Mg(2+) site.

This sequence belongs to the class-II aminoacyl-tRNA synthetase family. As to quaternary structure, homodimer. Requires Mg(2+) as cofactor.

The protein localises to the cytoplasm. It catalyses the reaction tRNA(Lys) + L-lysine + ATP = L-lysyl-tRNA(Lys) + AMP + diphosphate. The polypeptide is Lysine--tRNA ligase (Leptospira interrogans serogroup Icterohaemorrhagiae serovar Lai (strain 56601)).